The chain runs to 434 residues: RHOMBOID-like protein 9, chloroplastic (434 aa).

Residues 1–68 (MALFPLHHEV…SPRRRLCLVR (68 aa)) constitute a chloroplast transit peptide. 8 consecutive transmembrane segments (helical) span residues 182–202 (FYAVSILASINVGVCLFEAAA), 209–229 (MGLLSLPLLYGAKINDLILAG), 238–258 (MFLHSGIPHVALSSWALLTFG), 267–287 (LFTFCLIYILGGVSGNFMSFL), 289–309 (TADPTVGGTGPAFALIGAWLV), 326–346 (LFQKAIIMTGFGLILSHFGPI), 352–372 (LGALIAGIVYGFFTCPVLQLG), and 399–419 (FLLFTIFVAVIVTSLLLIGDG).

This sequence belongs to the peptidase S54 family.

The protein resides in the plastid. Its subcellular location is the chloroplast membrane. Its function is as follows. Probable rhomboid-type serine protease that catalyzes intramembrane proteolysis. The polypeptide is RHOMBOID-like protein 9, chloroplastic (Arabidopsis thaliana (Mouse-ear cress)).